The sequence spans 338 residues: Nicotinate-nucleotide--dimethylbenzimidazole phosphoribosyltransferase (338 aa).

The active-site Proton acceptor is the Glu-305.

The protein belongs to the CobT family.

It catalyses the reaction 5,6-dimethylbenzimidazole + nicotinate beta-D-ribonucleotide = alpha-ribazole 5'-phosphate + nicotinate + H(+). Its pathway is nucleoside biosynthesis; alpha-ribazole biosynthesis; alpha-ribazole from 5,6-dimethylbenzimidazole: step 1/2. Its function is as follows. Catalyzes the synthesis of alpha-ribazole-5'-phosphate from nicotinate mononucleotide (NAMN) and 5,6-dimethylbenzimidazole (DMB). In Rhizobium rhizogenes (strain K84 / ATCC BAA-868) (Agrobacterium radiobacter), this protein is Nicotinate-nucleotide--dimethylbenzimidazole phosphoribosyltransferase.